The following is a 780-amino-acid chain: LPS-assembly protein LptD (780 aa).

The N-terminal stretch at 1 to 24 (MKKRFPTLLATLIWTALYSQHTLA) is a signal peptide.

The protein belongs to the LptD family. Component of the lipopolysaccharide transport and assembly complex. Interacts with LptE and LptA.

It localises to the cell outer membrane. Functionally, together with LptE, is involved in the assembly of lipopolysaccharide (LPS) at the surface of the outer membrane. The protein is LPS-assembly protein LptD of Yersinia pestis bv. Antiqua (strain Antiqua).